We begin with the raw amino-acid sequence, 139 residues long: Large ribosomal subunit protein uL22 (139 aa).

Positions 1–22 (MVSENEKTRRPKRSIQHRQNKD) are disordered. Residues 9–18 (RRPKRSIQHR) are compositionally biased toward basic residues.

This sequence belongs to the universal ribosomal protein uL22 family. Part of the 50S ribosomal subunit.

In terms of biological role, this protein binds specifically to 23S rRNA; its binding is stimulated by other ribosomal proteins, e.g. L4, L17, and L20. It is important during the early stages of 50S assembly. It makes multiple contacts with different domains of the 23S rRNA in the assembled 50S subunit and ribosome. Functionally, the globular domain of the protein is located near the polypeptide exit tunnel on the outside of the subunit, while an extended beta-hairpin is found that lines the wall of the exit tunnel in the center of the 70S ribosome. In Pseudothermotoga lettingae (strain ATCC BAA-301 / DSM 14385 / NBRC 107922 / TMO) (Thermotoga lettingae), this protein is Large ribosomal subunit protein uL22.